The sequence spans 267 residues: Hydroxyethylthiazole kinase (267 aa).

Residue Met46 coordinates substrate. ATP-binding residues include Arg122 and Ser168. Gly195 lines the substrate pocket.

Belongs to the Thz kinase family. Mg(2+) serves as cofactor.

It carries out the reaction 5-(2-hydroxyethyl)-4-methylthiazole + ATP = 4-methyl-5-(2-phosphooxyethyl)-thiazole + ADP + H(+). It functions in the pathway cofactor biosynthesis; thiamine diphosphate biosynthesis; 4-methyl-5-(2-phosphoethyl)-thiazole from 5-(2-hydroxyethyl)-4-methylthiazole: step 1/1. Catalyzes the phosphorylation of the hydroxyl group of 4-methyl-5-beta-hydroxyethylthiazole (THZ). This Nitratidesulfovibrio vulgaris (strain DP4) (Desulfovibrio vulgaris) protein is Hydroxyethylthiazole kinase.